A 208-amino-acid polypeptide reads, in one-letter code: Probable GTP-binding protein EngB (208 aa).

The EngB-type G domain maps to 18–187 (KQFEICVIGR…FALMKKVVIQ (170 aa)). Residues 26–33 (GRSNVGKS), 52–56 (GRTQL), 69–72 (DLPG), 135–138 (NKLD), and 166–168 (VSA) contribute to the GTP site. Mg(2+)-binding residues include Ser33 and Thr54.

The protein belongs to the TRAFAC class TrmE-Era-EngA-EngB-Septin-like GTPase superfamily. EngB GTPase family. Requires Mg(2+) as cofactor.

In terms of biological role, necessary for normal cell division and for the maintenance of normal septation. The sequence is that of Probable GTP-binding protein EngB from Ureaplasma parvum serovar 3 (strain ATCC 27815 / 27 / NCTC 11736).